Reading from the N-terminus, the 265-residue chain is MKILSLSLLLLLAATVSASVPGLIELVDSKTIFGNVAELLEKEKLSINYANCRSWHLGVETSNIIDFDTVPANCKDYVEDYLITSKQYQYDSKTVCKEAYFYAKGLALKNDTVNVWIFDLDDTLLSSIPYYAKYGYGTEKTDPGAYWLWLGTGASTPGLPEALHLYQNIIELGIEPIILSDRWKLWKNVTLDNLEAAGVTYWKHLILKPNGSNLRQVVYKSKVRKSLVKKGYNIVGNIGDQWADLVEDTPGRVFKLPNPLYYVPS.

An N-terminal signal peptide occupies residues 1–18 (MKILSLSLLLLLAATVSA). Residues asparagine 110, asparagine 188, and asparagine 210 are each glycosylated (N-linked (GlcNAc...) asparagine).

The protein belongs to the APS1/VSP family. Highly expressed in flowers, but also found in leaves, vegetative shoots, petioles, peduncles, and receptacles of floral organs.

Its function is as follows. May function as somatic storage protein during early seedling development. The polypeptide is Vegetative storage protein 2 (VSP2) (Arabidopsis thaliana (Mouse-ear cress)).